The primary structure comprises 332 residues: Adenosine receptor A2b (332 aa).

The Extracellular portion of the chain corresponds to Met1–Ala8. A helical transmembrane segment spans residues Leu9–Gly33. Topologically, residues Ala34–Asn43 are cytoplasmic. A helical membrane pass occupies residues Tyr44 to Ile67. Over Ser68–Cys78 the chain is Extracellular. Cys78 and Cys171 are joined by a disulfide. The chain crosses the membrane as a helical span at residues Leu79–Val101. Topologically, residues Asp102 to Arg121 are cytoplasmic. A helical transmembrane segment spans residues Ala122–Trp144. Residues Asn145–Pro178 lie on the Extracellular side of the membrane. 2 N-linked (GlcNAc...) asparagine glycosylation sites follow: Asn153 and Asn163. Residue Glu174 participates in adenosine binding. The chain crosses the membrane as a helical span at residues Met179–Ile203. The Cytoplasmic segment spans residues Lys204 to Ser235. The chain crosses the membrane as a helical span at residues Leu236–Phe259. Asn254 contributes to the adenosine binding site. The Extracellular portion of the chain corresponds to His260 to Lys267. Residues Pro268–Ala291 form a helical membrane-spanning segment. Positions 279 and 280 each coordinate adenosine. Residues Tyr292–Leu332 are Cytoplasmic-facing. Cys311 is lipidated: S-palmitoyl cysteine.

The protein belongs to the G-protein coupled receptor 1 family.

The protein resides in the cell membrane. Functionally, receptor for adenosine. The activity of this receptor is mediated by G proteins which activate adenylyl cyclase. The sequence is that of Adenosine receptor A2b (Adora2b) from Rattus norvegicus (Rat).